The primary structure comprises 784 residues: Protein DBF4 homolog B (784 aa).

The BRCT domain maps to 27–117 (CREITFAGKS…SRGKQLLKKV (91 aa)). The tract at residues 222–243 (TVKKKDPGDQEEEEGQRSQKPQ) is disordered. The segment at 244–293 (ARKRKGYCECCEETFDTLSEHLVGEHHFRFVSNPLSYKMIDDLAAQLTCD) adopts a DBF4-type zinc-finger fold. The Zn(2+) site is built by Cys-251, Cys-254, His-264, and His-270. Disordered stretches follow at residues 299–332 (FGSP…GNEG), 348–368 (HADC…AEEP), and 495–529 (TVGS…AQPA). Positions 498–507 (SQGDVTSHSA) are enriched in polar residues.

Forms a complex with cdc7. Phosphorylated. Stably phosphorylated throughout the cell cycle.

It is found in the nucleus. Its function is as follows. Regulatory subunit for cdc7 which activates its kinase activity thereby playing a central role in DNA replication and cell proliferation. Specifically required during the initiation of DNA replication in egg and during early embryonic development. The complex cdc7-dbf4b phosphorylates mcm2 and mcm4 subunits and is required for cdc45 loading. The polypeptide is Protein DBF4 homolog B (dbf4b) (Xenopus laevis (African clawed frog)).